The chain runs to 311 residues: tRNA-cytidine(32) 2-sulfurtransferase (311 aa).

Positions 47 to 52 match the PP-loop motif motif; the sequence is SGGKDS. [4Fe-4S] cluster-binding residues include Cys122, Cys125, and Cys213.

This sequence belongs to the TtcA family. In terms of assembly, homodimer. The cofactor is Mg(2+). Requires [4Fe-4S] cluster as cofactor.

The protein localises to the cytoplasm. The enzyme catalyses cytidine(32) in tRNA + S-sulfanyl-L-cysteinyl-[cysteine desulfurase] + AH2 + ATP = 2-thiocytidine(32) in tRNA + L-cysteinyl-[cysteine desulfurase] + A + AMP + diphosphate + H(+). Its pathway is tRNA modification. Catalyzes the ATP-dependent 2-thiolation of cytidine in position 32 of tRNA, to form 2-thiocytidine (s(2)C32). The sulfur atoms are provided by the cysteine/cysteine desulfurase (IscS) system. In Salmonella typhi, this protein is tRNA-cytidine(32) 2-sulfurtransferase.